The sequence spans 360 residues: Photosystem II protein D1 (360 aa).

A run of 3 helical transmembrane segments spans residues 29–46 (YIGWFGCLMFPTLLSAIS), 118–133 (HFFIGVCAYIGREWEL), and 142–156 (WICVAFSAPVAAAAA). Chlorophyll a is bound at residue histidine 118. Tyrosine 126 contacts pheophytin a. [CaMn4O5] cluster is bound by residues aspartate 170 and glutamate 189. A helical membrane pass occupies residues 197–218 (FHMLGVAGVFGGSLFSAMHGSL). Histidine 198 contacts chlorophyll a. A quinone-binding positions include histidine 215 and 264–265 (SF). Histidine 215 is a binding site for Fe cation. A Fe cation-binding site is contributed by histidine 272. Residues 274-288 (FLGAWPVVGIWFTAM) form a helical membrane-spanning segment. Histidine 332, glutamate 333, aspartate 342, and alanine 344 together coordinate [CaMn4O5] cluster. A propeptide spanning residues 345 to 360 (AGESLPVALVAPAVAA) is cleaved from the precursor.

It belongs to the reaction center PufL/M/PsbA/D family. In terms of assembly, PSII is composed of 1 copy each of membrane proteins PsbA, PsbB, PsbC, PsbD, PsbE, PsbF, PsbH, PsbI, PsbJ, PsbK, PsbL, PsbM, PsbT, PsbX, PsbY, PsbZ, Psb30/Ycf12, at least 3 peripheral proteins of the oxygen-evolving complex and a large number of cofactors. It forms dimeric complexes. Requires The D1/D2 heterodimer binds P680, chlorophylls that are the primary electron donor of PSII, and subsequent electron acceptors. It shares a non-heme iron and each subunit binds pheophytin, quinone, additional chlorophylls, carotenoids and lipids. D1 provides most of the ligands for the Mn4-Ca-O5 cluster of the oxygen-evolving complex (OEC). There is also a Cl(-1) ion associated with D1 and D2, which is required for oxygen evolution. The PSII complex binds additional chlorophylls, carotenoids and specific lipids. as cofactor. In terms of processing, tyr-161 forms a radical intermediate that is referred to as redox-active TyrZ, YZ or Y-Z. Post-translationally, C-terminally processed by CTPA; processing is essential to allow assembly of the oxygen-evolving complex and thus photosynthetic growth.

The protein localises to the plastid. It is found in the chloroplast thylakoid membrane. The catalysed reaction is 2 a plastoquinone + 4 hnu + 2 H2O = 2 a plastoquinol + O2. Functionally, photosystem II (PSII) is a light-driven water:plastoquinone oxidoreductase that uses light energy to abstract electrons from H(2)O, generating O(2) and a proton gradient subsequently used for ATP formation. It consists of a core antenna complex that captures photons, and an electron transfer chain that converts photonic excitation into a charge separation. The D1/D2 (PsbA/PsbD) reaction center heterodimer binds P680, the primary electron donor of PSII as well as several subsequent electron acceptors. The protein is Photosystem II protein D1 of Emiliania huxleyi (Coccolithophore).